Consider the following 132-residue polypeptide: Prefoldin subunit alpha (132 aa).

This sequence belongs to the prefoldin subunit alpha family. Heterohexamer of two alpha and four beta subunits.

The protein localises to the cytoplasm. Functionally, molecular chaperone capable of stabilizing a range of proteins. Seems to fulfill an ATP-independent, HSP70-like function in archaeal de novo protein folding. This is Prefoldin subunit alpha (pfdA) from Pyrobaculum aerophilum (strain ATCC 51768 / DSM 7523 / JCM 9630 / CIP 104966 / NBRC 100827 / IM2).